Reading from the N-terminus, the 281-residue chain is Spermatogenesis-associated serine-rich protein 1 (281 aa).

Residues 1-14 show a composition bias toward basic and acidic residues; it reads MEAARDAQHSDVLE. A disordered region spans residues 1-92; that stretch reads MEAARDAQHS…SSSAQANRSL (92 aa). The segment covering 21 to 37 has biased composition (polar residues); the sequence is SRTSSHQNRRASLSSDG. T53 carries the post-translational modification Phosphothreonine. A compositionally biased stretch (polar residues) spans 54–65; sequence PSDTASGLGQKT. Positions 66-85 are enriched in low complexity; sequence SSTSSSSSSSSSSSPSSSSS. S71, S74, S77, S78, S79, and S91 each carry phosphoserine.

Detected in pachytene spermatocytes and round spermatids.

This Rattus norvegicus (Rat) protein is Spermatogenesis-associated serine-rich protein 1 (Spats1).